Here is a 143-residue protein sequence, read N- to C-terminus: 6,7-dimethyl-8-ribityllumazine synthase (143 aa).

5-amino-6-(D-ribitylamino)uracil-binding positions include W10, 44–46, and 68–70; these read SFE and CVI. 73–74 provides a ligand contact to (2S)-2-hydroxy-3-oxobutyl phosphate; sequence DT. The active-site Proton donor is H76. Y101 lines the 5-amino-6-(D-ribitylamino)uracil pocket. A (2S)-2-hydroxy-3-oxobutyl phosphate-binding site is contributed by R115.

The protein belongs to the DMRL synthase family.

The enzyme catalyses (2S)-2-hydroxy-3-oxobutyl phosphate + 5-amino-6-(D-ribitylamino)uracil = 6,7-dimethyl-8-(1-D-ribityl)lumazine + phosphate + 2 H2O + H(+). It participates in cofactor biosynthesis; riboflavin biosynthesis; riboflavin from 2-hydroxy-3-oxobutyl phosphate and 5-amino-6-(D-ribitylamino)uracil: step 1/2. Catalyzes the formation of 6,7-dimethyl-8-ribityllumazine by condensation of 5-amino-6-(D-ribitylamino)uracil with 3,4-dihydroxy-2-butanone 4-phosphate. This is the penultimate step in the biosynthesis of riboflavin. In Bacteroides fragilis (strain YCH46), this protein is 6,7-dimethyl-8-ribityllumazine synthase.